Here is a 423-residue protein sequence, read N- to C-terminus: Gamma-glutamyl phosphate reductase (423 aa).

A compositionally biased stretch (low complexity) spans 1–14 (MTLQAAPRSAAAQQ). The segment at 1 to 25 (MTLQAAPRSAAAQQREPDLRQEVHD) is disordered. The span at 15–25 (REPDLRQEVHD) shows a compositional bias: basic and acidic residues.

The protein belongs to the gamma-glutamyl phosphate reductase family.

The protein localises to the cytoplasm. It carries out the reaction L-glutamate 5-semialdehyde + phosphate + NADP(+) = L-glutamyl 5-phosphate + NADPH + H(+). It functions in the pathway amino-acid biosynthesis; L-proline biosynthesis; L-glutamate 5-semialdehyde from L-glutamate: step 2/2. Its function is as follows. Catalyzes the NADPH-dependent reduction of L-glutamate 5-phosphate into L-glutamate 5-semialdehyde and phosphate. The product spontaneously undergoes cyclization to form 1-pyrroline-5-carboxylate. The sequence is that of Gamma-glutamyl phosphate reductase from Mycobacterium ulcerans (strain Agy99).